A 301-amino-acid polypeptide reads, in one-letter code: Homoserine O-acetyltransferase (301 aa).

The active-site Acyl-thioester intermediate is Cys-142. Substrate is bound by residues Lys-163 and Ser-192. His-235 functions as the Proton acceptor in the catalytic mechanism. Glu-237 is a catalytic residue. Arg-249 provides a ligand contact to substrate.

The protein belongs to the MetA family.

It is found in the cytoplasm. It catalyses the reaction L-homoserine + acetyl-CoA = O-acetyl-L-homoserine + CoA. Its pathway is amino-acid biosynthesis; L-methionine biosynthesis via de novo pathway; O-acetyl-L-homoserine from L-homoserine: step 1/1. Its function is as follows. Transfers an acetyl group from acetyl-CoA to L-homoserine, forming acetyl-L-homoserine. This Novosphingobium aromaticivorans (strain ATCC 700278 / DSM 12444 / CCUG 56034 / CIP 105152 / NBRC 16084 / F199) protein is Homoserine O-acetyltransferase.